Here is a 349-residue protein sequence, read N- to C-terminus: Ureidoglycolate dehydrogenase (NAD(+)) (349 aa).

The Proton acceptor role is filled by His-116. Residues Ser-140, 174–176, Lys-224, and 306–308 each bind NAD(+); these read DMA and GQD.

The protein belongs to the LDH2/MDH2 oxidoreductase family. Homodimer.

The protein localises to the cytoplasm. The catalysed reaction is (S)-ureidoglycolate + NAD(+) = N-carbamoyl-2-oxoglycine + NADH + H(+). Its pathway is nitrogen metabolism; (S)-allantoin degradation; oxalurate from (S)-ureidoglycolate: step 1/1. Functionally, allD plays a pivotal role as a metabolic branch-point enzyme in nitrogen utilization via the assimilation of allantoin. It is able to utilize allantoin as a sole source of nitrogen under anaerobic conditions. Catalyzes the oxidation of ureidoglycolate to oxalurate. In Escherichia coli (strain K12), this protein is Ureidoglycolate dehydrogenase (NAD(+)).